Reading from the N-terminus, the 89-residue chain is Small ribosomal subunit protein uS15 (89 aa).

The protein belongs to the universal ribosomal protein uS15 family. As to quaternary structure, part of the 30S ribosomal subunit. Forms a bridge to the 50S subunit in the 70S ribosome, contacting the 23S rRNA.

In terms of biological role, one of the primary rRNA binding proteins, it binds directly to 16S rRNA where it helps nucleate assembly of the platform of the 30S subunit by binding and bridging several RNA helices of the 16S rRNA. Forms an intersubunit bridge (bridge B4) with the 23S rRNA of the 50S subunit in the ribosome. The chain is Small ribosomal subunit protein uS15 from Streptococcus equi subsp. zooepidemicus (strain H70).